The chain runs to 55 residues: ATP synthase protein 8 (55 aa).

The chain crosses the membrane as a helical span at residues 6–26 (PHPWFAILVFSWIFFLVILPK).

The protein belongs to the ATPase protein 8 family. In terms of assembly, F-type ATPases have 2 components, CF(1) - the catalytic core - and CF(0) - the membrane proton channel.

The protein resides in the mitochondrion membrane. Its function is as follows. Mitochondrial membrane ATP synthase (F(1)F(0) ATP synthase or Complex V) produces ATP from ADP in the presence of a proton gradient across the membrane which is generated by electron transport complexes of the respiratory chain. F-type ATPases consist of two structural domains, F(1) - containing the extramembraneous catalytic core and F(0) - containing the membrane proton channel, linked together by a central stalk and a peripheral stalk. During catalysis, ATP synthesis in the catalytic domain of F(1) is coupled via a rotary mechanism of the central stalk subunits to proton translocation. Part of the complex F(0) domain. Minor subunit located with subunit a in the membrane. This chain is ATP synthase protein 8 (MT-ATP8), found in Squalus acanthias (Spiny dogfish).